A 243-amino-acid chain; its full sequence is Vesicle-associated membrane protein-associated protein B (243 aa).

Alanine 2 bears the N-acetylalanine mark. Over 2–218 (AKVEQVLSLE…PASAMAGKEE (217 aa)) the chain is Cytoplasmic. Positions 7–124 (VLSLEPQHEL…MDSKLRCVFE (118 aa)) constitute an MSP domain. A Phosphoserine modification is found at serine 146. Residue lysine 147 forms a Glycyl lysine isopeptide (Lys-Gly) (interchain with G-Cter in SUMO1) linkage. A Phosphothreonine modification is found at threonine 150. A phosphoserine mark is found at serine 158, serine 159, and serine 160. The stretch at 161–196 (LDDTEVKKVMEECKRLQSEVQRLREENKQFKEEDGL) forms a coiled coil. Over residues 186–197 (ENKQFKEEDGLR) the composition is skewed to basic and acidic residues. The disordered stretch occupies residues 186-214 (ENKQFKEEDGLRMRKTAQSNSPAPASAMA). Serine 206 is modified (phosphoserine). The chain crosses the membrane as a helical; Anchor for type IV membrane protein span at residues 219 to 239 (GLSTRLLALVVLFFIVGVIIG).

The protein belongs to the VAMP-associated protein (VAP) (TC 9.B.17) family. As to quaternary structure, homodimer, and heterodimer with VAPA. Interacts with VAMP1 and VAMP2. Interacts (via MSP domain) with ZFYVE27. Interacts with RMDN3. Interacts with KIF5A in a ZFYVE27-dependent manner. Interacts (via MSP domain) with STARD3 (via phospho-FFAT motif). Interacts with STARD3NL (via FFAT motif). Interacts with CERT1. Interacts with PLEKHA3 and SACM1L to form a ternary complex. Interacts with VPS13A (via FFAT motif). Interacts with RB1CC1 (via phosphorylated FFAT motif), MIGA2 (via phosphorylated FFAT motif), RMDN3 (via phosphorylated FFAT motif), OSBPL1A (via FFAT motif), KCNB1 (via phosphorylated FFAT motif) and KCNB2 (via phosphorylated FFAT motif). Interacts (via MSP domain) with WDR44 (via FFAT motif); the interactions connect the endoplasmic reticulum (ER) with the endosomal tubule.

Its subcellular location is the endoplasmic reticulum membrane. Endoplasmic reticulum (ER)-anchored protein that mediates the formation of contact sites between the ER and endosomes via interaction with FFAT motif-containing proteins such as STARD3 or WDR44. Interacts with STARD3 in a FFAT motif phosphorylation dependent manner. Via interaction with WDR44 participates in neosynthesized protein export. Participates in the endoplasmic reticulum unfolded protein response (UPR) by inducing ERN1/IRE1 activity. Involved in cellular calcium homeostasis regulation. The protein is Vesicle-associated membrane protein-associated protein B of Bos taurus (Bovine).